A 262-amino-acid chain; its full sequence is Small ribosomal subunit protein mS23 (262 aa).

The segment covering 242–254 (AAEEQETSLDDDA) has biased composition (acidic residues). The interval 242-262 (AAEEQETSLDDDATEKVAVAA) is disordered.

The protein belongs to the mitochondrion-specific ribosomal protein mS23 family. As to quaternary structure, component of the mitochondrial small ribosomal subunit.

Its subcellular location is the mitochondrion. The protein is Small ribosomal subunit protein mS23 (rsm25) of Aspergillus niger (strain ATCC MYA-4892 / CBS 513.88 / FGSC A1513).